The sequence spans 205 residues: High frequency lysogenization protein HflD homolog (205 aa).

Belongs to the HflD family.

The protein localises to the cytoplasm. It is found in the cell inner membrane. The polypeptide is High frequency lysogenization protein HflD homolog (Alkalilimnicola ehrlichii (strain ATCC BAA-1101 / DSM 17681 / MLHE-1)).